We begin with the raw amino-acid sequence, 490 residues long: Betaine aldehyde dehydrogenase (490 aa).

The K(+) site is built by Ile27 and Asp93. Gly150–Trp152 is an NAD(+) binding site. Residue Lys162 is the Charge relay system of the active site. Lys176 to Glu179 contacts NAD(+). A K(+)-binding site is contributed by Val180. Gly230–Thr233 provides a ligand contact to NAD(+). K(+) is bound at residue Leu246. The active-site Proton acceptor is the Glu252. Residues Gly254, Cys286, and Glu387 each coordinate NAD(+). The active-site Nucleophile is Cys286. Cys286 carries the cysteine sulfenic acid (-SOH) modification. Residues Lys457 and Gly460 each contribute to the K(+) site. Glu464 (charge relay system) is an active-site residue.

Belongs to the aldehyde dehydrogenase family. As to quaternary structure, dimer of dimers. K(+) is required as a cofactor.

The catalysed reaction is betaine aldehyde + NAD(+) + H2O = glycine betaine + NADH + 2 H(+). It functions in the pathway amine and polyamine biosynthesis; betaine biosynthesis via choline pathway; betaine from betaine aldehyde: step 1/1. Functionally, involved in the biosynthesis of the osmoprotectant glycine betaine. Catalyzes the irreversible oxidation of betaine aldehyde to the corresponding acid. This is Betaine aldehyde dehydrogenase from Pseudomonas savastanoi pv. phaseolicola (strain 1448A / Race 6) (Pseudomonas syringae pv. phaseolicola (strain 1448A / Race 6)).